Reading from the N-terminus, the 134-residue chain is Putative pre-16S rRNA nuclease (134 aa).

It belongs to the YqgF nuclease family.

It localises to the cytoplasm. Functionally, could be a nuclease involved in processing of the 5'-end of pre-16S rRNA. This Hydrogenovibrio crunogenus (strain DSM 25203 / XCL-2) (Thiomicrospira crunogena) protein is Putative pre-16S rRNA nuclease.